Reading from the N-terminus, the 210-residue chain is Leucyl/phenylalanyl-tRNA--protein transferase (210 aa).

It belongs to the L/F-transferase family.

Its subcellular location is the cytoplasm. The enzyme catalyses N-terminal L-lysyl-[protein] + L-leucyl-tRNA(Leu) = N-terminal L-leucyl-L-lysyl-[protein] + tRNA(Leu) + H(+). It catalyses the reaction N-terminal L-arginyl-[protein] + L-leucyl-tRNA(Leu) = N-terminal L-leucyl-L-arginyl-[protein] + tRNA(Leu) + H(+). The catalysed reaction is L-phenylalanyl-tRNA(Phe) + an N-terminal L-alpha-aminoacyl-[protein] = an N-terminal L-phenylalanyl-L-alpha-aminoacyl-[protein] + tRNA(Phe). Functions in the N-end rule pathway of protein degradation where it conjugates Leu, Phe and, less efficiently, Met from aminoacyl-tRNAs to the N-termini of proteins containing an N-terminal arginine or lysine. This Roseobacter denitrificans (strain ATCC 33942 / OCh 114) (Erythrobacter sp. (strain OCh 114)) protein is Leucyl/phenylalanyl-tRNA--protein transferase.